The chain runs to 229 residues: MLTRKQHELLMFIHERIKETGVSPSFDEMKEALDLASKSGIHRLITALEERGFLRRLPHRARALEVVRLPQQATAAAPPKGRAPFKPQLVEAGQAMPVAANDTRELPILGKIAAGTPIEAIQQERDRLPVPEAMLGAGEHFVLEIQGDSMINAGILDGDFVVIRRTDSANSGDIVVALVDGEEATLKRLRKKGASIALEAANPAYETRIFGPDRVAVQGRLVGLIRRYH.

The H-T-H motif DNA-binding region spans 26-46 (FDEMKEALDLASKSGIHRLIT). Active-site for autocatalytic cleavage activity residues include S149 and K187.

Belongs to the peptidase S24 family. Homodimer.

It carries out the reaction Hydrolysis of Ala-|-Gly bond in repressor LexA.. Functionally, represses a number of genes involved in the response to DNA damage (SOS response), including recA and lexA. In the presence of single-stranded DNA, RecA interacts with LexA causing an autocatalytic cleavage which disrupts the DNA-binding part of LexA, leading to derepression of the SOS regulon and eventually DNA repair. The protein is LexA repressor of Phenylobacterium zucineum (strain HLK1).